We begin with the raw amino-acid sequence, 355 residues long: Serine acetyltransferase 4 (355 aa).

The protein belongs to the transferase hexapeptide repeat family. As to quaternary structure, homomultimer. As to expression, localized in vascular tissues, particularly in phloem.

The protein localises to the cytoplasm. It catalyses the reaction L-serine + acetyl-CoA = O-acetyl-L-serine + CoA. It functions in the pathway amino-acid biosynthesis; L-cysteine biosynthesis; L-cysteine from L-serine: step 1/2. Feedback inhibitions by L-Ser and acetyl-CoA. The sequence is that of Serine acetyltransferase 4 from Arabidopsis thaliana (Mouse-ear cress).